Reading from the N-terminus, the 275-residue chain is 2,3,4,5-tetrahydropyridine-2,6-dicarboxylate N-succinyltransferase (275 aa).

2 residues coordinate substrate: R108 and D145.

Belongs to the transferase hexapeptide repeat family. Homotrimer.

It localises to the cytoplasm. The enzyme catalyses (S)-2,3,4,5-tetrahydrodipicolinate + succinyl-CoA + H2O = (S)-2-succinylamino-6-oxoheptanedioate + CoA. Its pathway is amino-acid biosynthesis; L-lysine biosynthesis via DAP pathway; LL-2,6-diaminopimelate from (S)-tetrahydrodipicolinate (succinylase route): step 1/3. In Roseobacter denitrificans (strain ATCC 33942 / OCh 114) (Erythrobacter sp. (strain OCh 114)), this protein is 2,3,4,5-tetrahydropyridine-2,6-dicarboxylate N-succinyltransferase.